A 119-amino-acid chain; its full sequence is Putative membrane protein insertion efficiency factor (119 aa).

The protein belongs to the UPF0161 family.

The protein localises to the cell inner membrane. Its function is as follows. Could be involved in insertion of integral membrane proteins into the membrane. The protein is Putative membrane protein insertion efficiency factor of Agrobacterium fabrum (strain C58 / ATCC 33970) (Agrobacterium tumefaciens (strain C58)).